We begin with the raw amino-acid sequence, 434 residues long: 3-phosphoshikimate 1-carboxyvinyltransferase (434 aa).

Residues Lys-22, Ser-23, and Arg-27 each coordinate 3-phosphoshikimate. Lys-22 contacts phosphoenolpyruvate. Residues Gly-93 and Arg-121 each contribute to the phosphoenolpyruvate site. 3-phosphoshikimate-binding residues include Ser-168, Ser-169, Gln-170, Ser-199, Asp-320, and Lys-347. Position 170 (Gln-170) interacts with phosphoenolpyruvate. Asp-320 acts as the Proton acceptor in catalysis. Phosphoenolpyruvate-binding residues include Arg-351, Arg-394, and Lys-419.

The protein belongs to the EPSP synthase family. In terms of assembly, monomer.

It is found in the cytoplasm. It catalyses the reaction 3-phosphoshikimate + phosphoenolpyruvate = 5-O-(1-carboxyvinyl)-3-phosphoshikimate + phosphate. The protein operates within metabolic intermediate biosynthesis; chorismate biosynthesis; chorismate from D-erythrose 4-phosphate and phosphoenolpyruvate: step 6/7. In terms of biological role, catalyzes the transfer of the enolpyruvyl moiety of phosphoenolpyruvate (PEP) to the 5-hydroxyl of shikimate-3-phosphate (S3P) to produce enolpyruvyl shikimate-3-phosphate and inorganic phosphate. In Burkholderia vietnamiensis (strain G4 / LMG 22486) (Burkholderia cepacia (strain R1808)), this protein is 3-phosphoshikimate 1-carboxyvinyltransferase.